Reading from the N-terminus, the 316-residue chain is Porphobilinogen deaminase (316 aa).

C245 carries the S-(dipyrrolylmethanemethyl)cysteine modification.

It belongs to the HMBS family. As to quaternary structure, monomer. Dipyrromethane serves as cofactor.

The catalysed reaction is 4 porphobilinogen + H2O = hydroxymethylbilane + 4 NH4(+). It participates in porphyrin-containing compound metabolism; protoporphyrin-IX biosynthesis; coproporphyrinogen-III from 5-aminolevulinate: step 2/4. It functions in the pathway porphyrin-containing compound metabolism; chlorophyll biosynthesis. Tetrapolymerization of the monopyrrole PBG into the hydroxymethylbilane pre-uroporphyrinogen in several discrete steps. The polypeptide is Porphobilinogen deaminase (Prochlorococcus marinus (strain MIT 9515)).